A 1048-amino-acid chain; its full sequence is 3-hydroxy-3-methylglutaryl-coenzyme A reductase (1048 aa).

Residues 1–32 (MDPVVRKPDPGGVQHRVTKALRAIVGHACRHP) are Cytoplasmic-facing. Residues 33–53 (IHTLLVTALTAATTHLHVLEG) form a helical membrane-spanning segment. Residues 54–220 (TYQATHRGLA…FLHRVHHAET (167 aa)) lie on the Lumenal side of the membrane. A helical membrane pass occupies residues 221 to 241 (VDLVIIGLSYLAMNMTVVSLF). Residues 222–403 (DLVIIGLSYL…FTFYATILCV (182 aa)) enclose the SSD domain. The Cytoplasmic portion of the chain corresponds to 242-250 (RVMRHLGSR). Residues 251-271 (FWLAASVLLSGAFAFVLGLGI) traverse the membrane as a helical segment. Residues 272 to 276 (TTTCD) are Lumenal-facing. The chain crosses the membrane as a helical span at residues 277-297 (VPVDMLLLFEGIPYLVLTVGF). The Cytoplasmic segment spans residues 298–348 (EKPIQLTRAVLCVSEELWGGGQRQVPNGASSDDSRQNQLIPNIIQLAVDRE). Residues 349–369 (GWYIVRSYLLEIGALALGAVL) traverse the membrane as a helical segment. Topologically, residues 370–377 (RPKDSLGH) are lumenal. Residues 378 to 398 (FCFLAAWTLLIDAVLLFTFYA) traverse the membrane as a helical segment. The Cytoplasmic portion of the chain corresponds to 399–439 (TILCVKLEITRIRSPGGLGQVNAKHPSGIFGHKVKSTNITW). Residues 440-460 (WKLLTVGGFVLCHFLQLSPFF) form a helical membrane-spanning segment. The Lumenal portion of the chain corresponds to 461-542 (YRVMGEYMAN…LDGLESPLGR (82 aa)). 2 N-linked (GlcNAc...) asparagine glycosylation sites follow: N470 and N520. A helical membrane pass occupies residues 543–563 (LCLMGALVVSLVLNNHLIHAA). At 564–1048 (RWHAWPQARE…NRSAGATVKK (485 aa)) the chain is on the cytoplasmic side. Residue E729 is the Charge relay system of the active site. Position 735–741 (735–741 (SASRGCK)) interacts with CoA. Residues 796-798 (SRF) and 823-831 (DAMGMNMIS) contribute to the NADP(+) site. K863 acts as the Charge relay system in catalysis. 892–894 (VLK) contacts CoA. The active-site Charge relay system is D939. Position 1034–1035 (1034–1035 (AH)) interacts with CoA. H1035 serves as the catalytic Proton donor. NADP(+) is bound at residue 1039–1040 (NR).

It belongs to the HMG-CoA reductase family.

It is found in the endoplasmic reticulum membrane. It catalyses the reaction (R)-mevalonate + 2 NADP(+) + CoA = (3S)-3-hydroxy-3-methylglutaryl-CoA + 2 NADPH + 2 H(+). It participates in metabolic intermediate biosynthesis; (R)-mevalonate biosynthesis; (R)-mevalonate from acetyl-CoA: step 3/3. Its function is as follows. HMG-CoA reductase; part of the first module of ergosterol biosynthesis pathway that includes the early steps of the pathway, conserved across all eukaryotes, and which results in the formation of mevalonate from acetyl-coenzyme A (acetyl-CoA). In this module, the cytosolic acetyl-CoA acetyltransferase catalyzes the formation of acetoacetyl-CoA. The hydroxymethylglutaryl-CoA synthase then condenses acetyl-CoA with acetoacetyl-CoA to form HMG-CoA. The rate-limiting step of the early module is the reduction to mevalonate by the 3-hydroxy-3-methylglutaryl-coenzyme A (HMG-CoA) reductase. The polypeptide is 3-hydroxy-3-methylglutaryl-coenzyme A reductase (Aspergillus terreus).